An 81-amino-acid chain; its full sequence is A-kinase anchor protein 7 isoform alpha (81 aa).

Gly-2 is lipidated: N-myristoyl glycine. The tract at residues 2 to 11 is required for membrane localization; the sequence is GQLCCFPFAR. 2 S-palmitoyl cysteine lipidation sites follow: Cys-5 and Cys-6. An RII-binding region spans residues 29–42; that stretch reads LVRLSKRLVENAVL. The interval 49 to 81 is disordered; that stretch reads LEETQNKKQPGEGNSTKAEEGDRNGDGSDNNRK. The segment covering 65 to 81 has biased composition (basic and acidic residues); that stretch reads KAEEGDRNGDGSDNNRK.

As to quaternary structure, binds cAMP-dependent protein kinase (PKA). Interacts with PRKCA; only the cytoplasmic form is capable of interacting with PRKCA.

The protein localises to the lateral cell membrane. Functionally, targets the cAMP-dependent protein kinase (PKA) to the plasma membrane, and permits functional coupling to the L-type calcium channel. The membrane-associated form reduces epithelial sodium channel (ENaC) activity, whereas the free cytoplasmic form may negatively regulate ENaC channel feedback inhibition by intracellular sodium. In Mus musculus (Mouse), this protein is A-kinase anchor protein 7 isoform alpha (Akap7).